We begin with the raw amino-acid sequence, 261 residues long: Putative glyoxylase CFP32 (261 aa).

VOC domains are found at residues 11–129 (TPNW…LWQA) and 143–257 (TLIW…VLKP). Glyoxalase stretches follow at residues 13 to 123 (NWVD…TGAA) and 149 to 252 (LLTD…GAIF).

In Mycobacterium bovis (strain ATCC BAA-935 / AF2122/97), this protein is Putative glyoxylase CFP32.